The chain runs to 393 residues: Chorismate synthase (393 aa).

Residues Arg-40 and Arg-46 each coordinate NADP(+). Residues Arg-129 to Ser-131, Gln-249 to Ala-250, Gly-301, Lys-316 to Thr-320, and Arg-342 contribute to the FMN site.

It belongs to the chorismate synthase family. Homotetramer. FMNH2 serves as cofactor.

It carries out the reaction 5-O-(1-carboxyvinyl)-3-phosphoshikimate = chorismate + phosphate. It participates in metabolic intermediate biosynthesis; chorismate biosynthesis; chorismate from D-erythrose 4-phosphate and phosphoenolpyruvate: step 7/7. In terms of biological role, catalyzes the anti-1,4-elimination of the C-3 phosphate and the C-6 proR hydrogen from 5-enolpyruvylshikimate-3-phosphate (EPSP) to yield chorismate, which is the branch point compound that serves as the starting substrate for the three terminal pathways of aromatic amino acid biosynthesis. This reaction introduces a second double bond into the aromatic ring system. The sequence is that of Chorismate synthase from Geobacter sulfurreducens (strain ATCC 51573 / DSM 12127 / PCA).